Reading from the N-terminus, the 142-residue chain is Small ribosomal subunit protein uS12 (142 aa).

This sequence belongs to the universal ribosomal protein uS12 family. As to quaternary structure, part of the 30S ribosomal subunit.

Functionally, with S4 and S5 plays an important role in translational accuracy. Located at the interface of the 30S and 50S subunits. The chain is Small ribosomal subunit protein uS12 from Archaeoglobus fulgidus (strain ATCC 49558 / DSM 4304 / JCM 9628 / NBRC 100126 / VC-16).